Here is a 337-residue protein sequence, read N- to C-terminus: Glyceraldehyde-3-phosphate dehydrogenase, cytosolic (337 aa).

NAD(+)-binding positions include 13 to 14, aspartate 35, and arginine 82; that span reads RI. D-glyceraldehyde 3-phosphate-binding positions include 153-155, threonine 184, 213-214, and arginine 236; these read SCT and TG. Cysteine 154 acts as the Nucleophile in catalysis. Asparagine 318 contacts NAD(+).

Belongs to the glyceraldehyde-3-phosphate dehydrogenase family. As to quaternary structure, homotetramer.

It localises to the cytoplasm. The catalysed reaction is D-glyceraldehyde 3-phosphate + phosphate + NAD(+) = (2R)-3-phospho-glyceroyl phosphate + NADH + H(+). It functions in the pathway carbohydrate degradation; glycolysis; pyruvate from D-glyceraldehyde 3-phosphate: step 1/5. In terms of biological role, key enzyme in glycolysis that catalyzes the first step of the pathway by converting D-glyceraldehyde 3-phosphate (G3P) into 3-phospho-D-glyceroyl phosphate. Essential for the maintenance of cellular ATP levels and carbohydrate metabolism. This Craterostigma plantagineum (Blue gem) protein is Glyceraldehyde-3-phosphate dehydrogenase, cytosolic (GAPC).